The primary structure comprises 319 residues: Cobalamin biosynthesis protein CobD (319 aa).

3 consecutive transmembrane segments (helical) span residues 54-76, 154-173, and 301-318; these read VLLL…WLSY, GVTA…ALLY, and VLGF…IYAI.

The protein belongs to the CobD/CbiB family.

The protein localises to the cell membrane. It functions in the pathway cofactor biosynthesis; adenosylcobalamin biosynthesis. Converts cobyric acid to cobinamide by the addition of aminopropanol on the F carboxylic group. This chain is Cobalamin biosynthesis protein CobD, found in Halalkalibacterium halodurans (strain ATCC BAA-125 / DSM 18197 / FERM 7344 / JCM 9153 / C-125) (Bacillus halodurans).